The primary structure comprises 92 residues: MPKKDIQPKYFEEAKFICTTCANEFICGTTKREEMRIDVCSNCHPFFSGAQNFANTTGRVEQFKSKFARKEAINATAQKNSEDQKSKNKENK.

The protein belongs to the bacterial ribosomal protein bL31 family. Type A subfamily. As to quaternary structure, part of the 50S ribosomal subunit.

Binds the 23S rRNA. In Mesoplasma florum (strain ATCC 33453 / NBRC 100688 / NCTC 11704 / L1) (Acholeplasma florum), this protein is Large ribosomal subunit protein bL31.